The chain runs to 325 residues: Peroxidase 47 (325 aa).

The first 36 residues, 1–36, serve as a signal peptide directing secretion; that stretch reads MLTRFKKQNNKMVRANIVSMVLLMHAIVGFPFHARG. Disulfide bonds link Cys46–Cys125, Cys79–Cys84, Cys131–Cys321, and Cys209–Cys235. Residue His77 is the Proton acceptor of the active site. Asp78, Gly83, Asp85, and Ser87 together coordinate Ca(2+). Pro172 is a substrate binding site. Asn177 is a glycosylation site (N-linked (GlcNAc...) asparagine). His202 serves as a coordination point for heme b. Thr203 is a binding site for Ca(2+). Asp246, Thr248, and Asp253 together coordinate Ca(2+).

This sequence belongs to the peroxidase family. Classical plant (class III) peroxidase subfamily. It depends on heme b as a cofactor. Ca(2+) serves as cofactor.

The protein resides in the secreted. It carries out the reaction 2 a phenolic donor + H2O2 = 2 a phenolic radical donor + 2 H2O. Removal of H(2)O(2), oxidation of toxic reductants, biosynthesis and degradation of lignin, suberization, auxin catabolism, response to environmental stresses such as wounding, pathogen attack and oxidative stress. These functions might be dependent on each isozyme/isoform in each plant tissue. The polypeptide is Peroxidase 47 (PER47) (Arabidopsis thaliana (Mouse-ear cress)).